The sequence spans 274 residues: Tryptase beta-2 (274 aa).

Residues 1-19 (MLKLLLLLALSPLASLVHA) form the signal peptide. Residues 20-29 (APCPVKQRVG) constitute a propeptide, activation peptide. The Peptidase S1 domain maps to 30-271 (IVGGREASES…YLDWIHRYVP (242 aa)). A disulfide bridge links Cys-58 with Cys-74. His-73 functions as the Charge relay system in the catalytic mechanism. Position 96 is a phosphotyrosine (Tyr-96). Asn-104 is a glycosylation site (N-linked (GlcNAc...) asparagine). Asp-120 serves as the catalytic Charge relay system. Asn-131 is a glycosylation site (N-linked (GlcNAc...) asparagine). 3 disulfides stabilise this stretch: Cys-154/Cys-229, Cys-187/Cys-210, and Cys-219/Cys-247. Ser-223 (charge relay system) is an active-site residue.

This sequence belongs to the peptidase S1 family. Tryptase subfamily. Homotetramer. The active tetramer is converted to inactive monomers at neutral and acidic pH in the absence of heparin. Low concentrations of inactive monomers become active monomers at pH 6.0 in the presence of heparin. When the concentration of active monomers is higher, they convert to active monomers and then to active tetramers. These monomers are active and functionally distinct from the tetrameric enzyme. In contrast to the hidden active sites in the tetrameric form, the active site of the monomeric form is accessible for macromolecular proteins and inhibitors, e.g. fibrinogen which is a substrate for the monomeric but not for the tetrameric form. The monomeric form forms a complex with SERPINB6.

The protein localises to the secreted. The enzyme catalyses Preferential cleavage: Arg-|-Xaa, Lys-|-Xaa, but with more restricted specificity than trypsin.. Its function is as follows. Tryptase is the major neutral protease present in mast cells and is secreted upon the coupled activation-degranulation response of this cell type. Plays a role in innate immunity. This Rattus norvegicus (Rat) protein is Tryptase beta-2 (Tpsb2).